A 241-amino-acid chain; its full sequence is ATP synthase subunit a (241 aa).

The next 5 helical transmembrane spans lie at 21–41, 84–104, 116–136, 183–203, and 207–227; these read LASI…AIAC, VTLI…AIVI, DATV…YYGI, ILIG…WIIG, and LIAW…IFIM.

It belongs to the ATPase A chain family. As to quaternary structure, F-type ATPases have 2 components, CF(1) - the catalytic core - and CF(0) - the membrane proton channel. CF(1) has five subunits: alpha(3), beta(3), gamma(1), delta(1), epsilon(1). CF(0) has three main subunits: a(1), b(2) and c(9-12). The alpha and beta chains form an alternating ring which encloses part of the gamma chain. CF(1) is attached to CF(0) by a central stalk formed by the gamma and epsilon chains, while a peripheral stalk is formed by the delta and b chains.

Its subcellular location is the cell membrane. Its function is as follows. Key component of the proton channel; it plays a direct role in the translocation of protons across the membrane. The protein is ATP synthase subunit a of Staphylococcus carnosus (strain TM300).